We begin with the raw amino-acid sequence, 142 residues long: Large ribosomal subunit protein uL16 (142 aa).

Belongs to the universal ribosomal protein uL16 family. Part of the 50S ribosomal subunit.

In terms of biological role, binds 23S rRNA and is also seen to make contacts with the A and possibly P site tRNAs. The polypeptide is Large ribosomal subunit protein uL16 (Fervidobacterium nodosum (strain ATCC 35602 / DSM 5306 / Rt17-B1)).